Consider the following 67-residue polypeptide: Prokaryotic ubiquitin-like protein Pup (67 aa).

Low complexity predominate over residues 1–11; the sequence is MAGQEQQQPQS. Residues 1-47 are disordered; sequence MAGQEQQQPQSRESEFEDDAPATPPAPGEAQASAATQGVDDLLDEID. Positions 25-61 are ARC ATPase binding; it reads PAPGEAQASAATQGVDDLLDEIDGVLESNAEEFVRAF. Gln-67 carries the deamidated glutamine modification. Gln-67 participates in a covalent cross-link: Isoglutamyl lysine isopeptide (Gln-Lys) (interchain with K-? in acceptor proteins).

The protein belongs to the prokaryotic ubiquitin-like protein family. Strongly interacts with the proteasome-associated ATPase ARC through a hydrophobic interface; the interacting region of Pup lies in its C-terminal half. There is one Pup binding site per ARC hexamer ring. Is modified by deamidation of its C-terminal glutamine to glutamate by the deamidase Dop, a prerequisite to the subsequent pupylation process.

The protein operates within protein degradation; proteasomal Pup-dependent pathway. Its function is as follows. Protein modifier that is covalently attached to lysine residues of substrate proteins, thereby targeting them for proteasomal degradation. The tagging system is termed pupylation. The polypeptide is Prokaryotic ubiquitin-like protein Pup (Arthrobacter sp. (strain FB24)).